Reading from the N-terminus, the 114-residue chain is Iron-sulfur cluster insertion protein ErpA (114 aa).

Iron-sulfur cluster contacts are provided by C42, C106, and C108.

Belongs to the HesB/IscA family. As to quaternary structure, homodimer. Requires iron-sulfur cluster as cofactor.

Functionally, required for insertion of 4Fe-4S clusters for at least IspG. This is Iron-sulfur cluster insertion protein ErpA from Haemophilus ducreyi (strain 35000HP / ATCC 700724).